A 423-amino-acid chain; its full sequence is Gamma-glutamyl phosphate reductase (423 aa).

The protein belongs to the gamma-glutamyl phosphate reductase family.

Its subcellular location is the cytoplasm. The enzyme catalyses L-glutamate 5-semialdehyde + phosphate + NADP(+) = L-glutamyl 5-phosphate + NADPH + H(+). It participates in amino-acid biosynthesis; L-proline biosynthesis; L-glutamate 5-semialdehyde from L-glutamate: step 2/2. In terms of biological role, catalyzes the NADPH-dependent reduction of L-glutamate 5-phosphate into L-glutamate 5-semialdehyde and phosphate. The product spontaneously undergoes cyclization to form 1-pyrroline-5-carboxylate. This chain is Gamma-glutamyl phosphate reductase, found in Paraburkholderia xenovorans (strain LB400).